Reading from the N-terminus, the 328-residue chain is Putative GDP-L-fucose synthase 2 (328 aa).

At Ala2 the chain carries N-acetylalanine. Position 26–32 (26–32) interacts with NADP(+); the sequence is GHRGLVG. Catalysis depends on Tyr152, which acts as the Proton donor/acceptor. Residues Lys156, 179 to 182, and His195 each bind NADP(+); that span reads PTNL. Arg203, Trp218, Arg225, and Asp285 together coordinate substrate.

This sequence belongs to the NAD(P)-dependent epimerase/dehydratase family. Fucose synthase subfamily. In terms of assembly, homodimer.

It carries out the reaction GDP-beta-L-fucose + NADP(+) = GDP-4-dehydro-alpha-D-rhamnose + NADPH + H(+). It functions in the pathway nucleotide-sugar biosynthesis; GDP-L-fucose biosynthesis via de novo pathway; GDP-L-fucose from GDP-alpha-D-mannose: step 2/2. Its function is as follows. Catalyzes the two-step NADP-dependent conversion of GDP-4-dehydro-6-deoxy-D-mannose to GDP-fucose, involving an epimerase and a reductase reaction. This Arabidopsis thaliana (Mouse-ear cress) protein is Putative GDP-L-fucose synthase 2 (GER2).